The following is a 361-amino-acid chain: Ribosomal RNA large subunit methyltransferase M (361 aa).

S-adenosyl-L-methionine is bound by residues serine 190, 223-226 (CPGG), aspartate 242, aspartate 262, and aspartate 280. Lysine 309 serves as the catalytic Proton acceptor.

Belongs to the class I-like SAM-binding methyltransferase superfamily. RNA methyltransferase RlmE family. RlmM subfamily. In terms of assembly, monomer.

It is found in the cytoplasm. It carries out the reaction cytidine(2498) in 23S rRNA + S-adenosyl-L-methionine = 2'-O-methylcytidine(2498) in 23S rRNA + S-adenosyl-L-homocysteine + H(+). Its function is as follows. Catalyzes the 2'-O-methylation at nucleotide C2498 in 23S rRNA. The chain is Ribosomal RNA large subunit methyltransferase M from Actinobacillus pleuropneumoniae serotype 7 (strain AP76).